Here is a 231-residue protein sequence, read N- to C-terminus: Aldehyde decarbonylase (231 aa).

Residues Glu-32, Glu-60, His-63, Glu-115, and His-147 each contribute to the Fe cation site.

This sequence belongs to the aldehyde decarbonylase family. The cofactor is Binds 2 metal cations per subunit. The catalytic dinuclear metal-binding site could be either a di-iron or a manganese-iron cofactor..

It catalyses the reaction a long-chain fatty aldehyde + 2 NADPH + O2 + H(+) = a long-chain alkane + formate + 2 NADP(+) + H2O. Its function is as follows. Catalyzes the decarbonylation of fatty aldehydes to alkanes. Requires the presence of ferredoxin, ferredoxin reductase and NADPH for in vitro decarbonylase activity. Involved in the biosynthesis of alkanes, mainly heptadecane and pentadecane. This chain is Aldehyde decarbonylase, found in Synechocystis sp. (strain ATCC 27184 / PCC 6803 / Kazusa).